Consider the following 434-residue polypeptide: Enolase (434 aa).

Glutamine 168 serves as a coordination point for (2R)-2-phosphoglycerate. Residue glutamate 210 is the Proton donor of the active site. Mg(2+)-binding residues include aspartate 247, glutamate 292, and aspartate 319. The (2R)-2-phosphoglycerate site is built by lysine 344, arginine 373, serine 374, and lysine 395. Residue lysine 344 is the Proton acceptor of the active site.

This sequence belongs to the enolase family. The cofactor is Mg(2+).

It is found in the cytoplasm. The protein resides in the secreted. It localises to the cell surface. It carries out the reaction (2R)-2-phosphoglycerate = phosphoenolpyruvate + H2O. The protein operates within carbohydrate degradation; glycolysis; pyruvate from D-glyceraldehyde 3-phosphate: step 4/5. Its function is as follows. Catalyzes the reversible conversion of 2-phosphoglycerate (2-PG) into phosphoenolpyruvate (PEP). It is essential for the degradation of carbohydrates via glycolysis. The polypeptide is Enolase (Endomicrobium trichonymphae).